Consider the following 264-residue polypeptide: COP9 signalosome complex subunit 7b (264 aa).

An N-acetylalanine modification is found at Ala-2. The region spanning 2–159 (AGEQKPSSNL…QLLEVDFCIG (158 aa)) is the PCI domain. A coiled-coil region spans residues 188–237 (IEQQVLRANQYKENHNRTQQQVEAEVTNIKKTLKATASSSAQEMEQQLAE). A compositionally biased stretch (polar residues) spans 223-232 (TASSSAQEME). The segment at 223–264 (TASSSAQEMEQQLAERECPPHAEQRQPTKKMSKVKGLVSSRH) is disordered. Residues 235–248 (LAERECPPHAEQRQ) are compositionally biased toward basic and acidic residues. Ser-261 bears the Phosphothreonine mark. Arg-263 bears the Phosphoserine mark.

This sequence belongs to the CSN7/EIF3M family. CSN7 subfamily. In terms of assembly, component of the CSN complex, composed of COPS1/GPS1, COPS2, COPS3, COPS4, COPS5, COPS6, COPS7 (COPS7A or COPS7B), COPS8 and COPS9 isoform 1. In the complex, it probably interacts directly with COPS1, COPS2, COPS4, COPS5, COPS6 and COPS8. Interacts with EIF3S6. (Microbial infection) Interacts with vaccinia virus protein C9L.

Its subcellular location is the cytoplasm. It is found in the nucleus. Component of the COP9 signalosome complex (CSN), a complex involved in various cellular and developmental processes. The CSN complex is an essential regulator of the ubiquitin (Ubl) conjugation pathway by mediating the deneddylation of the cullin subunits of SCF-type E3 ligase complexes, leading to decrease the Ubl ligase activity of SCF-type complexes such as SCF, CSA or DDB2. The complex is also involved in phosphorylation of p53/TP53, JUN, I-kappa-B-alpha/NFKBIA, ITPK1 and IRF8/ICSBP, possibly via its association with CK2 and PKD kinases. CSN-dependent phosphorylation of TP53 and JUN promotes and protects degradation by the Ubl system, respectively. The protein is COP9 signalosome complex subunit 7b (COPS7B) of Homo sapiens (Human).